A 151-amino-acid polypeptide reads, in one-letter code: Troponin C, isoallergen Bla g 6.0101 (151 aa).

EF-hand domains follow at residues 7-42, 43-78, 83-118, and 119-151; these read EQIQLLKKAFDAFDREKKGCISTEMVGTILEMLGHR, LDDDMLQEIIAEVDADGSGELEFEEFVSLASRFLVE, AMQQELREAFRLYDKEGNGYITTNVLREILKELDDK, and ITAEDLDMMIEEIDSDGSGTVDFDEFMEVMTGE. Positions 56, 58, 60, 62, and 67 each coordinate Ca(2+). Ca(2+) is bound by residues D132, D134, S136, T138, and E143.

Belongs to the troponin C family.

Its function is as follows. Troponin is the central regulatory protein of striated muscle contraction. It consists of three components: Troponin-I (Tn-I) which is the inhibitor of actomyosin ATPase, Troponin-T (Tn-T) which contains the binding site for tropomyosin and Troponin-C (Tn-C). The binding of calcium to Tn-C abolishes the inhibitory action of Tn on actin filaments. The polypeptide is Troponin C, isoallergen Bla g 6.0101 (Blattella germanica (German cockroach)).